Reading from the N-terminus, the 517-residue chain is Probable G-protein coupled receptor Mth-like 4 (517 aa).

Residues 1 to 18 (MRILLIAVLFLLMPKSNA) form the signal peptide. Residues 19 to 212 (EIPGCDFFDT…LSSEHSRTWK (194 aa)) are Extracellular-facing. 5 disulfide bridges follow: cysteine 23–cysteine 77, cysteine 79–cysteine 84, cysteine 88–cysteine 183, cysteine 89–cysteine 100, and cysteine 145–cysteine 201. A glycan (N-linked (GlcNAc...) asparagine) is linked at asparagine 39. Residues asparagine 117 and asparagine 165 are each glycosylated (N-linked (GlcNAc...) asparagine). A helical transmembrane segment spans residues 213–233 (TVAIVISLICIILTISVYLYV). At 234–242 (EKLRNLHGK) the chain is on the cytoplasmic side. A helical membrane pass occupies residues 243–263 (CFICYLASLFLGYFFLVLNVW). Residues 264–272 (KYSSGFCVT) lie on the Extracellular side of the membrane. The chain crosses the membrane as a helical span at residues 273 to 293 (AGFLGYFSVMAAFFWLSVIGI). Residues 294–319 (HLRIKFSLASNCLHRLLPENPFRAYN) lie on the Cytoplasmic side of the membrane. Residues 320 to 340 (LYAWGIPLIMTAITYTADQVV) form a helical membrane-spanning segment. At 341–363 (KNEKLRPRVGVGKNCWIYTGDMT) the chain is on the extracellular side. A helical transmembrane segment spans residues 364-384 (VMIYFYGPMLLLIAFNIIMFV). Over 385–414 (LSAIYIYNIKKNVKGLVHKQQTNQQINDQQ) the chain is Cytoplasmic. The helical transmembrane segment at 415 to 435 (MFAIFLRLFILMGLSWSFEIL) threads the bilayer. Residues 436–459 (SFLLTKQQAWARALMVADYFNWSQ) are Extracellular-facing. N-linked (GlcNAc...) asparagine glycosylation is present at asparagine 456. The helical transmembrane segment at 460–480 (GTIIFVLFILKPSILKLIIAG) threads the bilayer. The Cytoplasmic portion of the chain corresponds to 481-517 (GRQNLPGSHHNSRSKAARYNSTHTACEGSIADPNAYC).

It belongs to the G-protein coupled receptor 2 family. Mth subfamily.

Its subcellular location is the cell membrane. The polypeptide is Probable G-protein coupled receptor Mth-like 4 (mthl4) (Drosophila melanogaster (Fruit fly)).